The chain runs to 70 residues: Large ribosomal subunit protein bL31 (70 aa).

Residues C16, C18, C38, and C41 each contribute to the Zn(2+) site.

This sequence belongs to the bacterial ribosomal protein bL31 family. Type A subfamily. In terms of assembly, part of the 50S ribosomal subunit. Requires Zn(2+) as cofactor.

Binds the 23S rRNA. The chain is Large ribosomal subunit protein bL31 from Vesicomyosocius okutanii subsp. Calyptogena okutanii (strain HA).